The primary structure comprises 329 residues: 2-oxoglutarate-dependent dioxygenase htyE (329 aa).

A Fe2OG dioxygenase domain is found at 175–289 (NTSELRLLHY…RYSVAYFGKP (115 aa)). 3 residues coordinate Fe cation: H201, D203, and H261. R280 serves as a coordination point for 2-oxoglutarate.

The protein belongs to the iron/ascorbate-dependent oxidoreductase family. The cofactor is Fe(2+).

Its pathway is antifungal biosynthesis. In terms of biological role, 2-oxoglutarate-dependent dioxygenase; part of the gene cluster that mediates the de novo generation of L-homotyrosine from acetyl-CoA and 4-hydroxyphenyl-pyruvate. L-homotyrosine is a building block of echinocandin B, a fungal lipidated cyclic hexapeptide that acts as an antifungal agent. L-homotyrosine 4-hydroxyphenyl-pyruvate first undergoes an aldol-type condensation by htyA with the C-2 of acetyl-CoA followed by the release of CoA to form 2-(4-hydroxybenzyl)-malate. This is followed by isomerization of 2-(4-hydroxy-benzyl)-malate to 3-(4-hydroxybenzyl)-malate by htyD. Thereafter, 3-(4-hydroxybenzyl)-malate undergoes decarboxylation and oxidation to form 2-oxo-4-(4-hydroxybenzyl)butanoic acid, coupled to reduction of NAD(+) to NADH by htyC. The product then undergoes transamination catalyzed by htyB to form L-homotyrosine. The polypeptide is 2-oxoglutarate-dependent dioxygenase htyE (Aspergillus rugulosus (Emericella rugulosa)).